The sequence spans 476 residues: Stromelysin-2 (476 aa).

Positions 1 to 17 (MEPLAILALLSLPICSA) are cleaved as a signal peptide. Residues 18-99 (YPLHGAVTQG…PRCGVPDVGG (82 aa)) constitute a propeptide, activation peptide. Residues 90–97 (PRCGVPDV) carry the Cysteine switch motif. Zn(2+) contacts are provided by Cys92, His168, Asp170, His183, His196, and His218. Glu219 is an active-site residue. The Zn(2+) site is built by His222 and His228. Hemopexin repeat units lie at residues 286–335 (PDKC…WPTL), 336–382 (PSDL…GFPP), 384–432 (VKKI…FPGI), and 433–476 (EPQV…WLLC). A disulfide bridge connects residues Cys289 and Cys476.

The protein belongs to the peptidase M10A family. Zn(2+) is required as a cofactor. Ca(2+) serves as cofactor. Expressed in small intestine. Weak levels in heart and lung.

Its subcellular location is the secreted. The protein localises to the extracellular space. It localises to the extracellular matrix. The catalysed reaction is Similar to stromelysin 1, but action on collagen types III, IV and V is weak.. Functionally, can degrade fibronectin, gelatins of type I, III, IV, and V; weakly collagens III, IV, and V. Activates procollagenase. This is Stromelysin-2 (Mmp10) from Mus musculus (Mouse).